The chain runs to 455 residues: Golgi pH regulator (455 aa).

Transmembrane regions (helical) follow at residues 5 to 25 and 46 to 66; these read ADSV…WLFF and VTFA…LGLL. The N-linked (GlcNAc...) asparagine glycan is linked to Asn67. The next 3 membrane-spanning stretches (helical) occupy residues 79–99, 111–131, and 150–170; these read LCVI…YFVV, LFSC…GDPF, and VGVI…VNCP. Asn180 is a glycosylation site (N-linked (GlcNAc...) asparagine). The next 4 membrane-spanning stretches (helical) occupy residues 290–310, 343–363, 378–398, and 425–445; these read GYFF…NIVF, ISFI…LITL, VIVL…VLLI, and WFDV…YLAH.

This sequence belongs to the Golgi pH regulator (TC 1.A.38) family. As to quaternary structure, homotrimer.

The protein resides in the golgi apparatus membrane. It catalyses the reaction iodide(out) = iodide(in). The enzyme catalyses chloride(in) = chloride(out). The catalysed reaction is bromide(in) = bromide(out). It carries out the reaction fluoride(in) = fluoride(out). In terms of biological role, voltage-gated channel that enables the transfer of anions such as iodide, chloride, bromide and fluoride which may function in counter-ion conductance and participates in Golgi acidification. The sequence is that of Golgi pH regulator (gpr89-b) from Xenopus laevis (African clawed frog).